Consider the following 267-residue polypeptide: uncharacterized protein (267 aa).

This is an uncharacterized protein from Escherichia coli (strain K12).